Here is a 130-residue protein sequence, read N- to C-terminus: Large ribosomal subunit protein bL20c (130 aa).

Belongs to the bacterial ribosomal protein bL20 family.

Its subcellular location is the plastid. The protein localises to the chloroplast. Binds directly to 23S ribosomal RNA and is necessary for the in vitro assembly process of the 50S ribosomal subunit. It is not involved in the protein synthesizing functions of that subunit. The sequence is that of Large ribosomal subunit protein bL20c (rpl20) from Glycine max (Soybean).